A 604-amino-acid polypeptide reads, in one-letter code: Aspartate--tRNA(Asp/Asn) ligase (604 aa).

Glu-168 is an L-aspartate binding site. The interval Gln-192–Lys-195 is aspartate. Arg-214 contributes to the L-aspartate binding site. ATP contacts are provided by residues Arg-214–Glu-216 and Gln-223. Residue His-446 coordinates L-aspartate. An ATP-binding site is contributed by Glu-480. Arg-487 contacts L-aspartate. Gly-532–Arg-535 is an ATP binding site. A disordered region spans residues Leu-575–Thr-604. Over residues Ala-577 to Ala-587 the composition is skewed to basic and acidic residues. Residues Arg-588–Thr-604 show a composition bias toward low complexity.

It belongs to the class-II aminoacyl-tRNA synthetase family. Type 1 subfamily. As to quaternary structure, homodimer.

The protein resides in the cytoplasm. The catalysed reaction is tRNA(Asx) + L-aspartate + ATP = L-aspartyl-tRNA(Asx) + AMP + diphosphate. Its function is as follows. Aspartyl-tRNA synthetase with relaxed tRNA specificity since it is able to aspartylate not only its cognate tRNA(Asp) but also tRNA(Asn). Reaction proceeds in two steps: L-aspartate is first activated by ATP to form Asp-AMP and then transferred to the acceptor end of tRNA(Asp/Asn). In Salinispora arenicola (strain CNS-205), this protein is Aspartate--tRNA(Asp/Asn) ligase.